We begin with the raw amino-acid sequence, 551 residues long: Glucose-6-phosphate isomerase 2 (551 aa).

The active-site Proton donor is the E353. Catalysis depends on residues H384 and K512.

The protein belongs to the GPI family.

Its subcellular location is the cytoplasm. It carries out the reaction alpha-D-glucose 6-phosphate = beta-D-fructose 6-phosphate. It participates in carbohydrate biosynthesis; gluconeogenesis. Its pathway is carbohydrate degradation; glycolysis; D-glyceraldehyde 3-phosphate and glycerone phosphate from D-glucose: step 2/4. In terms of biological role, catalyzes the reversible isomerization of glucose-6-phosphate to fructose-6-phosphate. The chain is Glucose-6-phosphate isomerase 2 from Colwellia psychrerythraea (strain 34H / ATCC BAA-681) (Vibrio psychroerythus).